A 431-amino-acid chain; its full sequence is Mannan endo-1,4-beta-mannosidase 5 (431 aa).

The signal sequence occupies residues 1–24; sequence MVPTRNRPMLRILGFFICAAFIYL. N45 is a glycosylation site (N-linked (GlcNAc...) asparagine). W97 contacts substrate. N168 is a glycosylation site (N-linked (GlcNAc...) asparagine). N213 contributes to the substrate binding site. The Proton donor role is filled by E214. An N-linked (GlcNAc...) asparagine glycan is attached at N282. Y294 serves as a coordination point for substrate. N-linked (GlcNAc...) asparagine glycosylation occurs at N301. E334 (nucleophile) is an active-site residue. W376 is a substrate binding site.

This sequence belongs to the glycosyl hydrolase 5 (cellulase A) family. Expressed in stems.

The protein resides in the secreted. It carries out the reaction Random hydrolysis of (1-&gt;4)-beta-D-mannosidic linkages in mannans, galactomannans and glucomannans.. The sequence is that of Mannan endo-1,4-beta-mannosidase 5 (MAN5) from Arabidopsis thaliana (Mouse-ear cress).